The primary structure comprises 274 residues: Kit ligand (274 aa).

Positions 1-25 are cleaved as a signal peptide; sequence MKKTQTWIITCIYLQLLLFNPLVRT. Residue Gln-26 is modified to Pyrrolidone carboxylic acid. Residues 26-215 are Extracellular-facing; it reads QGICRNRVTD…SDSIEDSSLQ (190 aa). Intrachain disulfides connect Cys-29–Cys-114 and Cys-68–Cys-164. N-linked (GlcNAc...) asparagine glycans are attached at residues Asn-90, Asn-97, Asn-145, and Asn-196. Residues 216–238 traverse the membrane as a helical segment; sequence WAAVALPAFFSLVIGFAFGALYW. Residues 239-274 are Cytoplasmic-facing; sequence KKKQPNLTRTVENIQINEEDNEISMLQEKEREFQEV.

This sequence belongs to the SCF family. As to quaternary structure, homodimer, non-covalently linked. Heterotetramer with KIT, binding two KIT molecules; thereby mediates KIT dimerization and subsequent activation by autophosphorylation. In terms of processing, a soluble form is produced by proteolytic processing of the extracellular domain.

Its subcellular location is the cytoplasm. It is found in the cytoskeleton. It localises to the cell membrane. The protein resides in the cell projection. The protein localises to the lamellipodium. Its subcellular location is the filopodium. It is found in the secreted. Functionally, ligand for the receptor-type protein-tyrosine kinase KIT. Plays an essential role in the regulation of cell survival and proliferation, hematopoiesis, stem cell maintenance, gametogenesis, mast cell development, migration and function, and in melanogenesis. KITLG/SCF binding can activate several signaling pathways. Promotes phosphorylation of PIK3R1, the regulatory subunit of phosphatidylinositol 3-kinase, and subsequent activation of the kinase AKT1. KITLG/SCF and KIT also transmit signals via GRB2 and activation of RAS, RAF1 and the MAP kinases MAPK1/ERK2 and/or MAPK3/ERK1. KITLG/SCF and KIT promote activation of STAT family members STAT1, STAT3 and STAT5. KITLG/SCF and KIT promote activation of PLCG1, leading to the production of the cellular signaling molecules diacylglycerol and inositol 1,4,5-trisphosphate. KITLG/SCF acts synergistically with other cytokines, probably interleukins. The protein is Kit ligand (KITLG) of Sus scrofa (Pig).